The following is a 339-amino-acid chain: MSKNAYAQSGVDVEAGYEVVERIKKHVARTERAGVMGGLGGFGGMFDLSKTGVKEPVLISGTDGVGTKLMLAIKYDKHDTIGQDCVAMCVNDIIAAGAEPLYFLDYVATGKNEPAKLEQVVAGVAEGCVQSGVALIGGETAEMPGMYGEDDYDLAGFAVGVAEKSQIIDGSKVAEGDVLLGLASSGIHSNGYSLVRRVFADYTGEEVLPELEGQKLKDVLLEPTRIYVKAALPLIKEELVNGIAHITGGGFIENVPRMFSDDLAAEIDESKVPVLPIFKALEKYGEIKHEEMFEIFNMGIGLMFAVKPENVERVKELLDEPVYEIGRIVKKDGASVVIK.

Belongs to the AIR synthase family.

The protein resides in the cytoplasm. It carries out the reaction 2-formamido-N(1)-(5-O-phospho-beta-D-ribosyl)acetamidine + ATP = 5-amino-1-(5-phospho-beta-D-ribosyl)imidazole + ADP + phosphate + H(+). It functions in the pathway purine metabolism; IMP biosynthesis via de novo pathway; 5-amino-1-(5-phospho-D-ribosyl)imidazole from N(2)-formyl-N(1)-(5-phospho-D-ribosyl)glycinamide: step 2/2. The protein is Phosphoribosylformylglycinamidine cyclo-ligase of Streptococcus thermophilus (strain ATCC BAA-491 / LMD-9).